A 376-amino-acid chain; its full sequence is Chorismate synthase (376 aa).

Positions 39 and 45 each coordinate NADP(+). FMN is bound by residues 115 to 117, Gly-276, 291 to 295, and Arg-317; these read RSS and KPIPT.

The protein belongs to the chorismate synthase family. In terms of assembly, homotetramer. The cofactor is FMNH2.

The enzyme catalyses 5-O-(1-carboxyvinyl)-3-phosphoshikimate = chorismate + phosphate. It participates in metabolic intermediate biosynthesis; chorismate biosynthesis; chorismate from D-erythrose 4-phosphate and phosphoenolpyruvate: step 7/7. In terms of biological role, catalyzes the anti-1,4-elimination of the C-3 phosphate and the C-6 proR hydrogen from 5-enolpyruvylshikimate-3-phosphate (EPSP) to yield chorismate, which is the branch point compound that serves as the starting substrate for the three terminal pathways of aromatic amino acid biosynthesis. This reaction introduces a second double bond into the aromatic ring system. This chain is Chorismate synthase, found in Thermotoga sp. (strain RQ2).